We begin with the raw amino-acid sequence, 411 residues long: Alpha-1-antiproteinase (411 aa).

The N-terminal stretch at 1–24 is a signal peptide; the sequence is MAPSISRGLLLLAALCCLAPSFLA. Ser33 carries the post-translational modification Phosphoserine. N-linked (GlcNAc...) asparagine glycosylation is found at Asn64, Asn101, and Asn265. The interval 367 to 386 is RCL; sequence GATVVEAVPMSLPPQVKFDH. At Ser377 the chain carries Phosphoserine.

This sequence belongs to the serpin family. As to quaternary structure, interacts with CELA2A. Interacts with ERGIC3 and LMAN1/ERGIC53. Interacts with PRSS1/Trypsin. As to expression, plasma.

It localises to the secreted. Its function is as follows. Inhibitor of serine proteases. The primary target is elastase, but also has a moderate affinity for plasmin and thrombin. The chain is Alpha-1-antiproteinase (Serpina1) from Rattus norvegicus (Rat).